A 267-amino-acid chain; its full sequence is Thyroxine 5-deiodinase (267 aa).

The Cytoplasmic segment spans residues 1 to 15 (MHDSGGVQMARALKH). A helical; Signal-anchor for type II membrane protein transmembrane segment spans residues 16–36 (AALCLMLLPRFLLAAVMLWLL). At 37–267 (DFLCIRKKVL…VNSQTAVLHV (231 aa)) the chain is on the extracellular side. Residue selenocysteine 131 is part of the active site. A non-standard amino acid (selenocysteine) is located at residue selenocysteine 131.

This sequence belongs to the iodothyronine deiodinase family. Monomer. Homodimer. May undergo minor heretodimerization with DIO1 and DIO2.

It is found in the cell membrane. The protein resides in the endosome membrane. The enzyme catalyses 3,3',5'-triiodo-L-thyronine + iodide + A + H(+) = L-thyroxine + AH2. It carries out the reaction 3,3'-diiodo-L-thyronine + iodide + A + H(+) = 3,3',5-triiodo-L-thyronine + AH2. It catalyses the reaction 3-iodo-L-thyronine + iodide + A + H(+) = 3,5-diiodo-L-thyronine + AH2. The catalysed reaction is L-thyronine + iodide + A + H(+) = 3-iodo-L-thyronine + AH2. The enzyme catalyses 3',5'-diiodo-L-thyronine + iodide + A + H(+) = 3,3',5'-triiodo-L-thyronine + AH2. It carries out the reaction 3'-iodo-L-thyronine + iodide + A + H(+) = 3,3'-diiodo-L-thyronine + AH2. It catalyses the reaction 3,3',5'-triiodothyronamine + iodide + A + H(+) = 3,3',5,5'-tetraiodothyronamine + AH2. The catalysed reaction is 3',5'-diiodothyronamine + iodide + A + H(+) = 3,3',5'-triiodothyronamine + AH2. The enzyme catalyses 3,3'-diiodothyronamine + iodide + A + H(+) = 3,3',5-triiodothyronamine + AH2. It carries out the reaction 3-iodothyronamine + iodide + A + H(+) = 3,5-diiodothyronamine + AH2. It catalyses the reaction 3'-iodothyronamine + iodide + A + H(+) = 3,3'-diiodothyronamine + AH2. The catalysed reaction is thyronamine + iodide + A + H(+) = 3-iodothyronamine + AH2. Its function is as follows. Plays a crucial role in the metabolism of thyroid hormones (TH) and has specific roles in TH activation and inactivation by deiodination. Catalyzes the deiodination of L-thyroxine (T4) to 3,3',5'-triiodothyronine (rT3), 3,5,3'-triiodothyronine (T3) to 3,3'-diiodothyronine (3,3'-T2), 3,5-diiodothyronine (3,5-T2) to 3-monoiodothyronine (3-T1), rT3 to 3',5'-diiodothyronine (3',5'-T2) and 3,3'-T2 to 3'-monoiodothyronine (3'-T1) via inner-ring deiodination (IRD). Catalyzes the deiodination of 3-T1 to L-thyronine (T0) via outer-ring deiodination (ORD). Catalyzes the tyrosyl ring deiodinations of 3,3',5,5'-tetraiodothyronamine, 3,3',5'-triiodothyronamine, 3,5,3'-triiodothyronamine, 3,5-diiodothyronamine, 3,3'-diiodothyronamine and 3-iodothyronamine. This Sparus aurata (Gilthead sea bream) protein is Thyroxine 5-deiodinase (dio3).